The chain runs to 357 residues: MIQKRKTRQIRVGNVKIGGDAPIVVQSMTSTKTHDVEATLNQIKRLYEAGCEIVRVAVPHKEDVEALEEIVKKSPMPVIADIHFAPSYAFLSMEKGVHGIRINPGNIGKEEIVREIVEEAKRRGVAVRIGVNSGSLEKDLLEKYGYPSAEALAESALRWSEKFEKWGFTNYKVSIKGSDVLQNVRANLIFAERTDVPLHIGITEAGMGTKGIIKSSVGIGILLYMGIGDTVRVSLTDDPVVEVETAYEILKSLGLRRRGVEIVACPTCGRIEVDLPKVVKEVQEKLSGVKTPLKVAVMGCVVNAIGEAREADIGLACGRGFAWLFKHGKPIKKVDESEMVDELLKEIQNMEKDGGTN.

Positions 265, 268, 300, and 307 each coordinate [4Fe-4S] cluster.

It belongs to the IspG family. As to quaternary structure, homodimer. The cofactor is [4Fe-4S] cluster.

It catalyses the reaction (2E)-4-hydroxy-3-methylbut-2-enyl diphosphate + oxidized [flavodoxin] + H2O + 2 H(+) = 2-C-methyl-D-erythritol 2,4-cyclic diphosphate + reduced [flavodoxin]. The protein operates within isoprenoid biosynthesis; isopentenyl diphosphate biosynthesis via DXP pathway; isopentenyl diphosphate from 1-deoxy-D-xylulose 5-phosphate: step 5/6. Converts 2C-methyl-D-erythritol 2,4-cyclodiphosphate (ME-2,4cPP) into 1-hydroxy-2-methyl-2-(E)-butenyl 4-diphosphate. This chain is 4-hydroxy-3-methylbut-2-en-1-yl diphosphate synthase (flavodoxin), found in Aquifex aeolicus (strain VF5).